The primary structure comprises 656 residues: Replication protein A 70 kDa DNA-binding subunit A (656 aa).

The segment at residues 225–307 (AIKARVTAKG…NHLNNEWEIL (83 aa)) is a DNA-binding region (OB). The segment at 516-542 (CPNMIGDRQCNKKVTKSTNGNWTCDKC) adopts a C4-type zinc-finger fold.

It belongs to the replication factor A protein 1 family. As to quaternary structure, heterotrimer of RPA1, RPA2 and RPA3 (canonical replication protein A complex). Interacts with RPA2B. In terms of tissue distribution, expressed in root tips, roots, shoot apical meristem (SAM), young leaves, flag leaves and ears, and at lower levels in mature leaves.

It is found in the nucleus. Component of the replication protein A complex (RPA) required for DNA recombination, repair and replication. The activity of RPA is mediated by single-stranded DNA binding and protein interactions. Plays an essential role in meiotic and somatic DNA repair, but is dispensable for DNA replication and homologous recombination. Is essential for normal progression through meiosis in pollen mother cells. Is involved in repair of double-strand DNA breaks (DSBs) induced by genotoxic stresses. The sequence is that of Replication protein A 70 kDa DNA-binding subunit A (RPA1A) from Oryza sativa subsp. japonica (Rice).